The sequence spans 483 residues: Cysteine--tRNA ligase (483 aa).

A Zn(2+)-binding site is contributed by Cys-27. The 'HIGH' region signature appears at 29–39 (ITAYDYCHIGH). Zn(2+) is bound by residues Cys-208, His-231, and Glu-235. The short motif at 263–267 (KMSKS) is the 'KMSKS' region element. Lys-266 is an ATP binding site.

The protein belongs to the class-I aminoacyl-tRNA synthetase family. As to quaternary structure, monomer. Requires Zn(2+) as cofactor.

It localises to the cytoplasm. It catalyses the reaction tRNA(Cys) + L-cysteine + ATP = L-cysteinyl-tRNA(Cys) + AMP + diphosphate. The protein is Cysteine--tRNA ligase of Desulfovibrio desulfuricans (strain ATCC 27774 / DSM 6949 / MB).